Consider the following 89-residue polypeptide: Small ribosomal subunit protein uS14A (89 aa).

It belongs to the universal ribosomal protein uS14 family. Part of the 30S ribosomal subunit. Contacts proteins S3 and S10.

In terms of biological role, binds 16S rRNA, required for the assembly of 30S particles and may also be responsible for determining the conformation of the 16S rRNA at the A site. The sequence is that of Small ribosomal subunit protein uS14A from Staphylococcus saprophyticus subsp. saprophyticus (strain ATCC 15305 / DSM 20229 / NCIMB 8711 / NCTC 7292 / S-41).